The following is a 256-amino-acid chain: Thiazole synthase (256 aa).

Lys-99 (schiff-base intermediate with DXP) is an active-site residue. Residues Gly-160, 186–187 (AG), and 208–209 (NT) contribute to the 1-deoxy-D-xylulose 5-phosphate site.

This sequence belongs to the ThiG family. In terms of assembly, homotetramer. Forms heterodimers with either ThiH or ThiS.

It is found in the cytoplasm. The enzyme catalyses [ThiS sulfur-carrier protein]-C-terminal-Gly-aminoethanethioate + 2-iminoacetate + 1-deoxy-D-xylulose 5-phosphate = [ThiS sulfur-carrier protein]-C-terminal Gly-Gly + 2-[(2R,5Z)-2-carboxy-4-methylthiazol-5(2H)-ylidene]ethyl phosphate + 2 H2O + H(+). It participates in cofactor biosynthesis; thiamine diphosphate biosynthesis. Catalyzes the rearrangement of 1-deoxy-D-xylulose 5-phosphate (DXP) to produce the thiazole phosphate moiety of thiamine. Sulfur is provided by the thiocarboxylate moiety of the carrier protein ThiS. In vitro, sulfur can be provided by H(2)S. The polypeptide is Thiazole synthase (Neorickettsia sennetsu (strain ATCC VR-367 / Miyayama) (Ehrlichia sennetsu)).